The chain runs to 388 residues: Succinate--CoA ligase [ADP-forming] subunit beta (388 aa).

One can recognise an ATP-grasp domain in the interval 9 to 244 (KEILRKYNVP…LDEEDANEIE (236 aa)). ATP-binding positions include Lys-46, 53–55 (GRG), Glu-99, Ala-102, and Glu-107. Mg(2+)-binding residues include Asn-199 and Asp-213. Residues Asn-264 and 321–323 (GIM) contribute to the substrate site.

This sequence belongs to the succinate/malate CoA ligase beta subunit family. Heterotetramer of two alpha and two beta subunits. The cofactor is Mg(2+).

The enzyme catalyses succinate + ATP + CoA = succinyl-CoA + ADP + phosphate. The catalysed reaction is GTP + succinate + CoA = succinyl-CoA + GDP + phosphate. The protein operates within carbohydrate metabolism; tricarboxylic acid cycle; succinate from succinyl-CoA (ligase route): step 1/1. Its function is as follows. Succinyl-CoA synthetase functions in the citric acid cycle (TCA), coupling the hydrolysis of succinyl-CoA to the synthesis of either ATP or GTP and thus represents the only step of substrate-level phosphorylation in the TCA. The beta subunit provides nucleotide specificity of the enzyme and binds the substrate succinate, while the binding sites for coenzyme A and phosphate are found in the alpha subunit. The polypeptide is Succinate--CoA ligase [ADP-forming] subunit beta (Cupriavidus necator (strain ATCC 17699 / DSM 428 / KCTC 22496 / NCIMB 10442 / H16 / Stanier 337) (Ralstonia eutropha)).